Consider the following 252-residue polypeptide: Ubiquinone biosynthesis O-methyltransferase (252 aa).

The S-adenosyl-L-methionine site is built by Arg51, Gly70, Asp91, and Met136.

Belongs to the methyltransferase superfamily. UbiG/COQ3 family.

It carries out the reaction a 3-demethylubiquinol + S-adenosyl-L-methionine = a ubiquinol + S-adenosyl-L-homocysteine + H(+). The catalysed reaction is a 3-(all-trans-polyprenyl)benzene-1,2-diol + S-adenosyl-L-methionine = a 2-methoxy-6-(all-trans-polyprenyl)phenol + S-adenosyl-L-homocysteine + H(+). It functions in the pathway cofactor biosynthesis; ubiquinone biosynthesis. Functionally, O-methyltransferase that catalyzes the 2 O-methylation steps in the ubiquinone biosynthetic pathway. In Albidiferax ferrireducens (strain ATCC BAA-621 / DSM 15236 / T118) (Rhodoferax ferrireducens), this protein is Ubiquinone biosynthesis O-methyltransferase.